Here is a 249-residue protein sequence, read N- to C-terminus: Probable septum site-determining protein MinC (249 aa).

Positions 115–141 (KPAQEAPAQAEPEAAAAPEPANEPAPA) are disordered. Low complexity predominate over residues 118 to 141 (QEAPAQAEPEAAAAPEPANEPAPA).

This sequence belongs to the MinC family. Interacts with MinD and FtsZ.

Functionally, cell division inhibitor that blocks the formation of polar Z ring septums. Rapidly oscillates between the poles of the cell to destabilize FtsZ filaments that have formed before they mature into polar Z rings. Prevents FtsZ polymerization. In Marinobacter nauticus (strain ATCC 700491 / DSM 11845 / VT8) (Marinobacter aquaeolei), this protein is Probable septum site-determining protein MinC.